The primary structure comprises 274 residues: Proteasome subunit beta type-5-A (274 aa).

Residues 1 to 57 (MKLDTSGFETSMPMIGFGSSSDMLDELSSVPSFDLPRTKEFDGFQKKAKDMLKHAKG) constitute a propeptide, removed in mature form. The active-site Nucleophile is Thr58.

This sequence belongs to the peptidase T1B family. Component of the 20S core complex of the 26S proteasome. The 26S proteasome is composed of a core protease (CP), known as the 20S proteasome, capped at one or both ends by the 19S regulatory particle (RP/PA700). The 20S proteasome core is composed of 28 subunits that are arranged in four stacked rings, resulting in a barrel-shaped structure. The two end rings are each formed by seven alpha subunits, and the two central rings are each formed by seven beta subunits. The catalytic chamber with the active sites is on the inside of the barrel. Ubiquitous low levels, higher expression in siliques and flowers.

Its subcellular location is the cytoplasm. The protein localises to the nucleus. The enzyme catalyses Cleavage of peptide bonds with very broad specificity.. The proteasome is a multicatalytic proteinase complex which is characterized by its ability to cleave peptides with Arg, Phe, Tyr, Leu, and Glu adjacent to the leaving group at neutral or slightly basic pH. The proteasome has an ATP-dependent proteolytic activity. The sequence is that of Proteasome subunit beta type-5-A (PBE1) from Arabidopsis thaliana (Mouse-ear cress).